The sequence spans 44 residues: Antibacterial protein 2 homolog (44 aa).

It belongs to the staphylococcal hemolytic protein family.

It is found in the secreted. Its function is as follows. Has hemolytic activity and also inhibits the growth of gonococci. The chain is Antibacterial protein 2 homolog from Staphylococcus haemolyticus (strain JCSC1435).